Consider the following 127-residue polypeptide: Large ribosomal subunit protein uL24B (127 aa).

This sequence belongs to the universal ribosomal protein uL24 family. As to quaternary structure, component of the large ribosomal subunit (LSU). Mature yeast ribosomes consist of a small (40S) and a large (60S) subunit. The 40S small subunit contains 1 molecule of ribosomal RNA (18S rRNA) and 33 different proteins (encoded by 57 genes). The large 60S subunit contains 3 rRNA molecules (25S, 5.8S and 5S rRNA) and 46 different proteins (encoded by 81 genes).

The protein resides in the cytoplasm. In terms of biological role, component of the ribosome, a large ribonucleoprotein complex responsible for the synthesis of proteins in the cell. The small ribosomal subunit (SSU) binds messenger RNAs (mRNAs) and translates the encoded message by selecting cognate aminoacyl-transfer RNA (tRNA) molecules. The large subunit (LSU) contains the ribosomal catalytic site termed the peptidyl transferase center (PTC), which catalyzes the formation of peptide bonds, thereby polymerizing the amino acids delivered by tRNAs into a polypeptide chain. The nascent polypeptides leave the ribosome through a tunnel in the LSU and interact with protein factors that function in enzymatic processing, targeting, and the membrane insertion of nascent chains at the exit of the ribosomal tunnel. The chain is Large ribosomal subunit protein uL24B from Saccharomyces cerevisiae (strain ATCC 204508 / S288c) (Baker's yeast).